We begin with the raw amino-acid sequence, 61 residues long: Conotoxin LiC32 (61 aa).

The signal sequence occupies residues 1–22; sequence MRCVPVFIILLLLSPSAPSVDA. Positions 23–44 are excised as a propeptide; the sequence is HPKTKDDVPLASFHDDAKRTLQ. Cys60 carries the cysteine amide modification.

It belongs to the conotoxin T superfamily. Contains 2 disulfide bonds that can be either 'C1-C3, C2-C4' or 'C1-C4, C2-C3', since these disulfide connectivities have been observed for conotoxins with cysteine framework V (for examples, see AC P0DQQ7 and AC P81755). As to expression, expressed by the venom duct.

The protein resides in the secreted. Has the ability to interact with the G-protein coupled somatostatin type 3 receptor (SSTR3). The ability was measured in competition binding experiments and the constant of inhibition (Ki) has been evaluated to be 3.5 uM. The protein is Conotoxin LiC32 of Conus lividus (Livid cone).